Reading from the N-terminus, the 227-residue chain is PKHD-type hydroxylase Patl_2273 (227 aa).

The Fe2OG dioxygenase domain maps to 78–178 (KIYPPKFNRY…RTASFFWIES (101 aa)). Positions 96, 98, and 159 each coordinate Fe cation. R169 lines the 2-oxoglutarate pocket.

Fe(2+) is required as a cofactor. Requires L-ascorbate as cofactor.

This is PKHD-type hydroxylase Patl_2273 from Pseudoalteromonas atlantica (strain T6c / ATCC BAA-1087).